The following is a 62-amino-acid chain: Potassium channel toxin gamma-KTx 1.1 (62 aa).

A signal peptide spans 1–20; it reads MKVLILIMIIASLMIMGVEM. Cystine bridges form between cysteine 25/cysteine 43, cysteine 31/cysteine 54, cysteine 40/cysteine 59, and cysteine 44/cysteine 61.

Belongs to the ergtoxin family. Gamma-KTx 1 subfamily. In terms of processing, after protein storage at -20 Celsius degrees during a couple of months, the Met-55 of a small number of toxins is naturally oxidized. This oxidized form is about three orders of magnitude less efficient (IC(50)=15 uM) than non-oxidized form. In terms of tissue distribution, expressed by the venom gland.

The protein localises to the secreted. In terms of biological role, blocks human and rat Kv11.1/KCNH2/ERG1 and Kv11.3/KCNH7/ERG3, as well as rat (but not human) Kv11.2/KCNH6/ERG2 by binding to channel outer vestibule (S5P domain) with a 1:1 stoichiometry. Inhibition data are the following: hERG1 (reversible, IC(50)~7 nM), rERG1 (reversible, Kd=6.8 nM), rERG2 (irreversible, Kd=2.8 nM), hERG3 (irreversible, Kd=4.05 nM) and rERG3 (reversible, Kd=38.1 nM) potassium channels. The toxin potency is not affected by elevating potassium ion concentration from 2 to 98 mM. This toxin only blocks channels in a closed state. At high toxin concentrations, block of Kv11.1/KCNH2/ERG1 macroscopic current is incomplete (93.5%). This suggests a kinetic mechanism model with two different states of toxin-channel binding (T+C=TC*=TC; in the TC* state, the toxin binds the channel but does not occlude the pore, whereas in the TC state the toxin binds and occludes the pore). In this model, incomplete block is explained by the relatively fast dissociation rate from the blocked channel conformation (TC) relative to the rate of conversion of the toxin-channel encounter complex (TC*) to the blocked channel conformation (TC). This chain is Potassium channel toxin gamma-KTx 1.1, found in Centruroides noxius (Mexican scorpion).